The chain runs to 273 residues: DnaJ homolog subfamily C member 27 (273 aa).

The interval 1-18 is required for interaction with MAPK1; sequence MEANMPKRKEPGRSLRIK. Residues 23-30, 71-75, and 134-137 contribute to the GTP site; these read GNAEVGKS, DMAGH, and NKID. The 57-residue stretch at 217 to 273 folds into the J domain; sequence DSWDMLGVKPGASRDEVNKAYRKLAVLLHPDKCVAPGSEDAFKAVVNARTALLKNIK.

Belongs to the small GTPase superfamily. Rab family. In terms of assembly, interacts directly with MAPK1 (wild-type and kinase-deficient forms). Interacts directly (in GTP-bound form) with MAP2K1 (wild-type and kinase-deficient forms). As to expression, overexpressed in gastrointestinal cancers; expression correlates with later tumor-node-metastasis stages of colorectal cancers.

Its subcellular location is the nucleus. GTPase which can activate the MEK/ERK pathway and induce cell transformation when overexpressed. May act as a nuclear scaffold for MAPK1, probably by association with MAPK1 nuclear export signal leading to enhanced ERK1/ERK2 signaling. This is DnaJ homolog subfamily C member 27 (DNAJC27) from Homo sapiens (Human).